The sequence spans 872 residues: G-type lectin S-receptor-like serine/threonine-protein kinase At5g24080 (872 aa).

Residues 1-25 form the signal peptide; the sequence is MSSFHFYFPSVGLFSFFCFFLVSLA. The Extracellular portion of the chain corresponds to 26–472; that stretch reads TEPHIGLGSK…SRKSHGLRQK (447 aa). In terms of domain architecture, Bulb-type lectin spans 30 to 149; the sequence is IGLGSKLKAS…EVTAGPTIWQ (120 aa). N49, N117, N208, N219, N261, and N294 each carry an N-linked (GlcNAc...) asparagine glycan. Residues 306 to 344 enclose the EGF-like; atypical domain; that stretch reads VSNPCDIAGICGNGVCNLDRTKKNADCLCLPGSVKLPDQ. Cystine bridges form between C310-C321 and C316-C332. Residues N353, N367, and N390 are each glycosylated (N-linked (GlcNAc...) asparagine). One can recognise a PAN domain in the interval 360 to 447; it reads CESNINRNGS…PGSTLFVKTR (88 aa). Intrachain disulfides connect C400–C424 and C404–C410. 2 N-linked (GlcNAc...) asparagine glycosylation sites follow: N449 and N459. The chain crosses the membrane as a helical span at residues 473–493; the sequence is VLVIPIVVGMLVLVALLGMLL. The Cytoplasmic portion of the chain corresponds to 494–872; it reads YYNLDRKRTL…TCSYSSMSPR (379 aa). T521 is subject to Phosphothreonine. The Protein kinase domain occupies 530-810; that stretch reads NNFSQLLGSG…LEGTSDEINL (281 aa). ATP contacts are provided by residues 536–544 and K558; that span reads LGSGGFGTV. Y603 bears the Phosphotyrosine mark. Positions 619 to 637 are caM-binding; it reads EQTANLLDWRTRFEIAVAT. The active-site Proton acceptor is the D656. Residues T690 and T695 each carry the phosphothreonine modification.

The protein belongs to the protein kinase superfamily. Ser/Thr protein kinase family.

It is found in the cell membrane. The enzyme catalyses L-seryl-[protein] + ATP = O-phospho-L-seryl-[protein] + ADP + H(+). The catalysed reaction is L-threonyl-[protein] + ATP = O-phospho-L-threonyl-[protein] + ADP + H(+). This is G-type lectin S-receptor-like serine/threonine-protein kinase At5g24080 from Arabidopsis thaliana (Mouse-ear cress).